The primary structure comprises 110 residues: Quaternary ammonium compound-resistance protein QacE (110 aa).

4 helical membrane-spanning segments follow: residues 1-21 (MKGW…TSAL), 30-50 (LAPS…LSLV), 58-78 (VAYA…AWLL), and 85-105 (AWGF…NLLS).

Belongs to the drug/metabolite transporter (DMT) superfamily. Small multidrug resistance (SMR) (TC 2.A.7.1) family.

It is found in the cell membrane. Its function is as follows. Multidrug exporter. Is implicated for the resistance to bacteriocidal quaternary ammonium compounds. This chain is Quaternary ammonium compound-resistance protein QacE (qacE), found in Escherichia coli.